The primary structure comprises 520 residues: MKNRRYEVEILQIEGIYQSDPTTIFNQLCNKKKCTLLLESAEIDKKHALESMIIIDSALRISSLDNIVTIEALTENGKSLLFKLDLLLPLTVKNVLFENSRRLIFPFINHEIDEDKKLRSVSIFDTFRLLIKTMKIPKNLTKSMFFGGLFSYDLVNNFEKLPILNRNQKCPDLCFYLAETLLILDHKKKNCIIQSSLFNRKSSEKNRLKKNLQEIKTKLTQNVPKIEHRKIDQISLKCNLTDKEYIKIIKKMKQSIKKGDIFQVVPSRKFYLPCISSLSAYQRLKQSNPSPYMFFMQDSDFTLFGASPESSLKYDSKSKKIEIYPIAGTRPRGKTENGLIDLDLDSKIELEMRMNEKELSEHLMLVDLARNDLARICEPGSRYVASLTKVDRYSCVMHLVSKIVGRLKSNLDIFHAYCACMNMGTLTGAPKIKAMELISKFEKERRGSYGGSIGYFTESNNFDTCIIIRSAYVENNLATVQAGAGIVLDSVPQEEANESRNKAQAVIQAIIYAHSSREVV.

L-tryptophan is bound by residues S40 and 291-293; that span reads PYM. 328–329 is a chorismate binding site; it reads GT. A Mg(2+)-binding site is contributed by E361. Chorismate contacts are provided by residues Y449, R469, 483-485, and G485; that span reads GAG. E498 lines the Mg(2+) pocket.

This sequence belongs to the anthranilate synthase component I family. Heterotetramer consisting of two non-identical subunits: a beta subunit (TrpG) and a large alpha subunit (TrpE). Mg(2+) is required as a cofactor.

It catalyses the reaction chorismate + L-glutamine = anthranilate + pyruvate + L-glutamate + H(+). The protein operates within amino-acid biosynthesis; L-tryptophan biosynthesis; L-tryptophan from chorismate: step 1/5. Feedback inhibited by tryptophan. In terms of biological role, part of a heterotetrameric complex that catalyzes the two-step biosynthesis of anthranilate, an intermediate in the biosynthesis of L-tryptophan. In the first step, the glutamine-binding beta subunit (TrpG) of anthranilate synthase (AS) provides the glutamine amidotransferase activity which generates ammonia as a substrate that, along with chorismate, is used in the second step, catalyzed by the large alpha subunit of AS (TrpE) to produce anthranilate. In the absence of TrpG, TrpE can synthesize anthranilate directly from chorismate and high concentrations of ammonia. The chain is Anthranilate synthase component 1 (trpE) from Buchnera aphidicola subsp. Pemphigus spyrothecae.